We begin with the raw amino-acid sequence, 377 residues long: MVNATLSVVQKNSAFVGSATGELAARAIGMLYPGVKQSDLSEEQKQTISTLATVSAGLAGGLTGSSTASAAVGAQSGKNAVENNYLSTNQSLTFDKELSDCRKSGGNCQDIIDKWEKISDEQSAEIDQKLKDNPLEAQVIDKEVAKGGYDMTQRPGWLGNIGVEVMTSDEAKAYVQKWNGRDLTKIDVNSPEWTKFAVFASDPENQAMLVSGGLLVKDITKAAISFMSRNTATATVNASEVGMQWGQGNMKQGMPWEDYVGKSLPADARLPKNFKIFDYYDGATKTATSVKSIDTQTMAKLANPNQVYSSIKGNIDAAAKFKEYALSGRELTSSMISNREIQLAIPADTTKTQWAEINRAIEYGKSQGVKVTVTQVK.

Positions 81–84 (VENN) match the VENN CT cleavage motif motif. An inner membrane translocation domain (IMTD), targets to YciB region spans residues 85–233 (YLSTNQSLTF…ISFMSRNTAT (149 aa)). Positions 88 to 377 (TNQSLTFDKE…GVKVTVTQVK (290 aa)) are CT domain, sufficient to interact with CdiI. The segment at 222 to 377 (AAISFMSRNT…GVKVTVTQVK (156 aa)) is has DNase activity in vivo, cannot be expressed in the absence of CdiI. Residues glutamate 257, aspartate 278, serine 289, and lysine 291 contribute to the active site. Residues glutamate 257 and aspartate 278 each contribute to the Zn(2+) site.

Interacts with cognate immunity protein CdiI-o11-EC869, which blocks its toxic DNase activity. Zn(2+) is required as a cofactor.

It is found in the target cell. Its subcellular location is the target cell cytoplasm. Functionally, toxic component of a toxin-immunity protein module, which functions as a cellular contact-dependent growth inhibition (CDI) system. CDI modules allow bacteria to communicate with and inhibit the growth of closely related neighboring bacteria in a contact-dependent fashion. The C-terminal 289 residues (the CT fragment) has a strong DNase activity in the presence of Zn(2+), completely degrading supercoiled and linear plasmids, and inhibits growth. In the presence of Mg(2+) it nicks dsDNA. Toxic activity is neutralized by coexpression of the cognate immunity protein CdiI-o11-EC869, but not by non-cognate immunity proteins from other toxin-immunity modules or other strains of E.coli. Gains access to the cytoplasm of target cells by using integral inner membrane protein YciB. Its function is as follows. Expression of this locus confers protection against other bacteria carrying the locus. In Escherichia coli O157:H7 (strain EC869), this protein is Deoxyribonuclease CdiA-o11 (cdiA4).